A 393-amino-acid chain; its full sequence is Acetyl-CoA acetyltransferase (393 aa).

The active-site Acyl-thioester intermediate is the Cys90. Residues His349 and Cys379 each act as proton acceptor in the active site.

Belongs to the thiolase-like superfamily. Thiolase family. Homotetramer.

It is found in the cytoplasm. It catalyses the reaction 2 acetyl-CoA = acetoacetyl-CoA + CoA. It functions in the pathway biopolymer metabolism; poly-(R)-3-hydroxybutanoate biosynthesis. Its pathway is metabolic intermediate biosynthesis; (R)-mevalonate biosynthesis; (R)-mevalonate from acetyl-CoA: step 1/3. This is Acetyl-CoA acetyltransferase from Rhizobium meliloti (strain 1021) (Ensifer meliloti).